The sequence spans 257 residues: Gamma-secretase subunit APH-1B (257 aa).

A run of 7 helical transmembrane segments spans residues 5–25, 32–52, 71–91, 115–135, 158–178, 186–206, and 213–233; these read VFFGCAFIAFGPALALYVFTI, IIFLIAGAFFWLVSLLISSLV, LLIFGAFVSVYIQEMFRFAYY, LLAYVSGLGFGIMSGVFSFVN, YSAFMTLVIILLHVFWGIVFF, WGILLIVLLTHLLVSAQTFIS, and LASAFIILVLMGTWAFLAAGG.

Belongs to the APH-1 family. In terms of assembly, probable component of the gamma-secretase complex, a complex composed of a presenilin homodimer (PSEN1 or PSEN2), nicastrin (NCSTN), APH1 (APH1A or APH1B) and PEN2. Such minimal complex is sufficient for secretase activity, although other components may exist. Interacts with PSEN1 and PSEN2. As to expression, weakly or not expressed in leukocytes, lung, placenta, small intestine, liver, kidney, spleen thymus, colon, skeletal muscle, heart and brain.

The protein resides in the membrane. Probable subunit of the gamma-secretase complex, an endoprotease complex that catalyzes the intramembrane cleavage of integral proteins such as Notch receptors and APP (amyloid-beta precursor protein). It probably represents a stabilizing cofactor for the presenilin homodimer that promotes the formation of a stable complex. Probably present in a minority of gamma-secretase complexes compared to APH1A. The polypeptide is Gamma-secretase subunit APH-1B (APH1B) (Homo sapiens (Human)).